We begin with the raw amino-acid sequence, 115 residues long: Large ribosomal subunit protein bL20 (115 aa).

This sequence belongs to the bacterial ribosomal protein bL20 family.

Binds directly to 23S ribosomal RNA and is necessary for the in vitro assembly process of the 50S ribosomal subunit. It is not involved in the protein synthesizing functions of that subunit. This is Large ribosomal subunit protein bL20 from Prochlorococcus marinus (strain MIT 9312).